A 508-amino-acid polypeptide reads, in one-letter code: Glycerol kinase (508 aa).

T17 lines the ADP pocket. ATP is bound by residues T17, T18, and S19. Sn-glycerol 3-phosphate is bound at residue T17. R21 serves as a coordination point for ADP. Residues R87, E88, Y139, and D256 each contribute to the sn-glycerol 3-phosphate site. 5 residues coordinate glycerol: R87, E88, Y139, D256, and Q257. 2 residues coordinate ADP: T278 and G322. The ATP site is built by T278, G322, Q326, and A423. ADP contacts are provided by A423 and N427.

The protein belongs to the FGGY kinase family.

The enzyme catalyses glycerol + ATP = sn-glycerol 3-phosphate + ADP + H(+). The protein operates within polyol metabolism; glycerol degradation via glycerol kinase pathway; sn-glycerol 3-phosphate from glycerol: step 1/1. With respect to regulation, inhibited by fructose 1,6-bisphosphate (FBP). In terms of biological role, key enzyme in the regulation of glycerol uptake and metabolism. Catalyzes the phosphorylation of glycerol to yield sn-glycerol 3-phosphate. The protein is Glycerol kinase of Corynebacterium efficiens (strain DSM 44549 / YS-314 / AJ 12310 / JCM 11189 / NBRC 100395).